A 246-amino-acid polypeptide reads, in one-letter code: Ribulose-phosphate 3-epimerase (246 aa).

Serine 9 is a substrate binding site. 3 residues coordinate a divalent metal cation: histidine 34, aspartate 36, and histidine 83. Catalysis depends on aspartate 36, which acts as the Proton acceptor. Substrate-binding positions include histidine 83, 159–162 (GFGG), 188–190 (DGG), and 210–212 (GTS). Position 188 (aspartate 188) interacts with a divalent metal cation. Catalysis depends on aspartate 188, which acts as the Proton donor.

It belongs to the ribulose-phosphate 3-epimerase family. Co(2+) serves as cofactor. Fe(2+) is required as a cofactor. Requires Mn(2+) as cofactor. It depends on Zn(2+) as a cofactor.

It catalyses the reaction D-ribulose 5-phosphate = D-xylulose 5-phosphate. It participates in carbohydrate degradation; pentose phosphate pathway; D-xylulose 5-phosphate from D-ribulose 5-phosphate (non-oxidative stage): step 1/1. In terms of biological role, catalyzes the reversible epimerization of D-ribulose 5-phosphate to D-xylulose 5-phosphate. This is Ribulose-phosphate 3-epimerase (RPE1) from Candida glabrata (strain ATCC 2001 / BCRC 20586 / JCM 3761 / NBRC 0622 / NRRL Y-65 / CBS 138) (Yeast).